We begin with the raw amino-acid sequence, 1026 residues long: Glutactin (1026 aa).

The N-terminal stretch at 1 to 17 is a signal peptide; that stretch reads MKPLLLVLALCGAQVHA. Sulfotyrosine occurs at positions 26 and 29. The N-linked (GlcNAc...) asparagine glycan is linked to Asn115. A disulfide bridge links Cys123 with Cys145. At Tyr182 the chain carries Sulfotyrosine. Cysteines 298 and 316 form a disulfide. N-linked (GlcNAc...) asparagine glycosylation is found at Asn368 and Asn402. Position 559 is a sulfotyrosine (Tyr559). The disordered stretch occupies residues 601–641; the sequence is PITTTTTTTTTTTTTSRPYAYNPYANWQNRPSQQHPNWHPA. Residues 603–615 show a composition bias toward low complexity; the sequence is TTTTTTTTTTTTT. The segment covering 625–636 has biased composition (polar residues); it reads ANWQNRPSQQHP. Tyr645 carries the sulfotyrosine modification. Disordered regions lie at residues 659–695 and 723–1026; these read EREQRRREQQLRDQQRYPQQEPREQQDERIRQQREQE and EREQ…NSRN. Over residues 723–752 the composition is skewed to basic and acidic residues; it reads EREQYEREQQEREQREREELERQQREREQQ. A Sulfotyrosine modification is found at Tyr727. Asn810 carries an N-linked (GlcNAc...) asparagine glycan. Residues 811–854 show a composition bias toward basic and acidic residues; the sequence is FSEEDREQQQQEQLRREQQEQQEREYQLQLEREQQEREQQERGQ. Tyr836, Tyr862, Tyr865, Tyr868, Tyr922, and Tyr928 each carry sulfotyrosine. Residues 855-866 are compositionally biased toward low complexity; that stretch reads QEPGPEEYPSYE. Over residues 867-893 the composition is skewed to basic and acidic residues; sequence EYSRALQEKNAERDRIYAEEQERERQQ. Positions 923-944 are enriched in basic and acidic residues; the sequence is DGDRSYAEEQEREQQRRDQVEQ. Over residues 945-969 the composition is skewed to acidic residues; sequence EREEQPDEDQGEEYERSPDEEEAAE. Sulfotyrosine occurs at positions 981, 984, and 1006. A compositionally biased stretch (basic and acidic residues) spans 1002–1026; it reads EEERYRAQQEEEDRIQAERERNSRN.

In the N-terminal section; belongs to the type-B carboxylesterase/lipase family. In terms of processing, extensively O-glycosylated and also N-glycosylated. About four tyrosines are sulfated.

Its subcellular location is the secreted. The protein localises to the extracellular space. It is found in the extracellular matrix. The protein resides in the basement membrane. Not known. Binds calcium ions. In Drosophila melanogaster (Fruit fly), this protein is Glutactin (Glt).